The following is a 438-amino-acid chain: Methylenetetrahydrofolate--tRNA-(uracil-5-)-methyltransferase TrmFO 2 (438 aa).

9–14 lines the FAD pocket; that stretch reads GAGLAG.

The protein belongs to the MnmG family. TrmFO subfamily. The cofactor is FAD.

It is found in the cytoplasm. The enzyme catalyses uridine(54) in tRNA + (6R)-5,10-methylene-5,6,7,8-tetrahydrofolate + NADH + H(+) = 5-methyluridine(54) in tRNA + (6S)-5,6,7,8-tetrahydrofolate + NAD(+). It catalyses the reaction uridine(54) in tRNA + (6R)-5,10-methylene-5,6,7,8-tetrahydrofolate + NADPH + H(+) = 5-methyluridine(54) in tRNA + (6S)-5,6,7,8-tetrahydrofolate + NADP(+). Functionally, catalyzes the folate-dependent formation of 5-methyl-uridine at position 54 (M-5-U54) in all tRNAs. The chain is Methylenetetrahydrofolate--tRNA-(uracil-5-)-methyltransferase TrmFO 2 from Mycoplasma mycoides subsp. mycoides SC (strain CCUG 32753 / NCTC 10114 / PG1).